A 389-amino-acid polypeptide reads, in one-letter code: Chalcone synthase (389 aa).

Residue cysteine 164 is part of the active site.

It belongs to the thiolase-like superfamily. Chalcone/stilbene synthases family.

The enzyme catalyses (E)-4-coumaroyl-CoA + 3 malonyl-CoA + 3 H(+) = 2',4,4',6'-tetrahydroxychalcone + 3 CO2 + 4 CoA. Its pathway is secondary metabolite biosynthesis; flavonoid biosynthesis. The primary product of this enzyme is 4,2',4',6'-tetrahydroxychalcone (also termed naringenin-chalcone or chalcone) which can under specific conditions spontaneously isomerize into naringenin. The protein is Chalcone synthase (CHS) of Pueraria montana var. lobata (Kudzu vine).